A 410-amino-acid polypeptide reads, in one-letter code: G-protein coupled receptor family C group 5 member B (410 aa).

Positions 1–28 (MFLVLERKMRTHQVFPLPLLLVIASVAS) are cleaved as a signal peptide. Over 29-56 (ENASTSRGCGLDLLPQYVSLCDLDAIWG) the chain is Extracellular. The N-linked (GlcNAc...) asparagine glycan is linked to N30. A helical transmembrane segment spans residues 57-77 (IVVEAVAGAGALITLLLMLIL). At 78-94 (LVRLPFIKDKERKRPVC) the chain is on the cytoplasmic side. Residues 95-115 (LHFLFLLGTLGLFGLTFAFII) traverse the membrane as a helical segment. At 116-126 (QMDETICSIRR) the chain is on the extracellular side. Residues 127 to 147 (FLWGVLFALCFSCLLSQAWRV) form a helical membrane-spanning segment. The Cytoplasmic portion of the chain corresponds to 148–164 (RRLVRQGTSPASWQLVS). A helical membrane pass occupies residues 165–185 (LALCLMLVQVIIATEWLVLTV). Residues 186–199 (LRDTKPACAYEPMD) are Extracellular-facing. The helical transmembrane segment at 200 to 220 (FVMALIYDMVLLAITLAQSLF) threads the bilayer. The Cytoplasmic segment spans residues 221 to 234 (TLCGKFKRWKVNGA). The helical transmembrane segment at 235–255 (FILVTTFLSALIWVVWMTMYL) threads the bilayer. Residues 256–271 (FGNSLIKQGDAWSDPT) lie on the Extracellular side of the membrane. A helical membrane pass occupies residues 272–292 (LAITLAASGWVFVIFHAIPEI). The Cytoplasmic portion of the chain corresponds to 293–410 (HYTLLPPLQE…PPSHTGRHHW (118 aa)). Phosphoserine is present on S355. Residues 356-381 (LEQRSSSLGKKPSSLGNRPSAPFRSN) are disordered. Residues 360–371 (SSSLGKKPSSLG) are compositionally biased toward low complexity.

It belongs to the G-protein coupled receptor 3 family.

Its subcellular location is the cell membrane. The protein resides in the cytoplasmic vesicle membrane. Its function is as follows. G-protein coupled receptor involved in the regulation of cell volume. This chain is G-protein coupled receptor family C group 5 member B (Gprc5b), found in Mus musculus (Mouse).